The chain runs to 433 residues: Chaperone SurA (433 aa).

A signal peptide spans methionine 1–alanine 24. PpiC domains are found at residues asparagine 175–aspartate 276 and valine 285–aspartate 384.

The protein resides in the periplasm. It carries out the reaction [protein]-peptidylproline (omega=180) = [protein]-peptidylproline (omega=0). In terms of biological role, chaperone involved in the correct folding and assembly of outer membrane proteins. Recognizes specific patterns of aromatic residues and the orientation of their side chains, which are found more frequently in integral outer membrane proteins. May act in both early periplasmic and late outer membrane-associated steps of protein maturation. This chain is Chaperone SurA, found in Colwellia psychrerythraea (strain 34H / ATCC BAA-681) (Vibrio psychroerythus).